Here is a 428-residue protein sequence, read N- to C-terminus: Gamma-glutamyl phosphate reductase (428 aa).

It belongs to the gamma-glutamyl phosphate reductase family.

The protein resides in the cytoplasm. The enzyme catalyses L-glutamate 5-semialdehyde + phosphate + NADP(+) = L-glutamyl 5-phosphate + NADPH + H(+). The protein operates within amino-acid biosynthesis; L-proline biosynthesis; L-glutamate 5-semialdehyde from L-glutamate: step 2/2. Functionally, catalyzes the NADPH-dependent reduction of L-glutamate 5-phosphate into L-glutamate 5-semialdehyde and phosphate. The product spontaneously undergoes cyclization to form 1-pyrroline-5-carboxylate. In Chelativorans sp. (strain BNC1), this protein is Gamma-glutamyl phosphate reductase.